A 673-amino-acid polypeptide reads, in one-letter code: DNA ligase (673 aa).

NAD(+)-binding positions include aspartate 35–aspartate 39, serine 84–leucine 85, and glutamate 115. The N6-AMP-lysine intermediate role is filled by lysine 117. 4 residues coordinate NAD(+): arginine 138, glutamate 180, lysine 296, and lysine 320. Zn(2+) is bound by residues cysteine 415, cysteine 418, cysteine 433, and cysteine 438. The region spanning glutamate 595 to lysine 673 is the BRCT domain.

This sequence belongs to the NAD-dependent DNA ligase family. LigA subfamily. Mg(2+) serves as cofactor. Requires Mn(2+) as cofactor.

It carries out the reaction NAD(+) + (deoxyribonucleotide)n-3'-hydroxyl + 5'-phospho-(deoxyribonucleotide)m = (deoxyribonucleotide)n+m + AMP + beta-nicotinamide D-nucleotide.. Functionally, DNA ligase that catalyzes the formation of phosphodiester linkages between 5'-phosphoryl and 3'-hydroxyl groups in double-stranded DNA using NAD as a coenzyme and as the energy source for the reaction. It is essential for DNA replication and repair of damaged DNA. The sequence is that of DNA ligase from Koribacter versatilis (strain Ellin345).